Consider the following 307-residue polypeptide: MAKQMEKKSARLLAFLLALIMIGSVFAYMLSGGSAEHREVVYRLDDFREYVNWTPADPVYVQYYNLSYTSKLGSKDPLASMVTTDLQKLLIPAIFSRQVLEVTRGISQVMIVDFGETVPLYFVDAGMSKIYFAKEDEIKHGNFTLQVRRPGIALVSELSPLVVGYKPLVEKAVDTVEGNYPSFGNKTYSYLSRINGSFAYAFFAYGDVVKQWIRVGNESPADFFFEGYRYNFNNSSYEKVWAMHFEGNYFFGGMNESEKNFEYYKVQNFGDGLSVAVMEDKNFTKVVNARPNILTWQISFNNTQNES.

Residues 12-34 (LLAFLLALIMIGSVFAYMLSGGS) form a helical membrane-spanning segment.

It localises to the membrane. This is an uncharacterized protein from Archaeoglobus fulgidus (strain ATCC 49558 / DSM 4304 / JCM 9628 / NBRC 100126 / VC-16).